The chain runs to 453 residues: GTPase Der (453 aa).

2 consecutive EngA-type G domains span residues 4–169 and 177–352; these read PIVA…PPVT and IKIA…EEHK. GTP-binding positions include 10 to 17, 57 to 61, 120 to 123, 183 to 190, 230 to 234, and 295 to 298; these read GRPNVGKS, DTGGL, NKCE, DTAGI, and NKWD. Residues 353-438 form the KH-like domain; it reads RRVSTSVINE…PIRLLWRSKK (86 aa).

It belongs to the TRAFAC class TrmE-Era-EngA-EngB-Septin-like GTPase superfamily. EngA (Der) GTPase family. As to quaternary structure, associates with the 50S ribosomal subunit.

GTPase that plays an essential role in the late steps of ribosome biogenesis. The sequence is that of GTPase Der from Nostoc sp. (strain PCC 7120 / SAG 25.82 / UTEX 2576).